The chain runs to 105 residues: Large ribosomal subunit protein uL24 (105 aa).

This sequence belongs to the universal ribosomal protein uL24 family. In terms of assembly, part of the 50S ribosomal subunit.

Its function is as follows. One of two assembly initiator proteins, it binds directly to the 5'-end of the 23S rRNA, where it nucleates assembly of the 50S subunit. In terms of biological role, one of the proteins that surrounds the polypeptide exit tunnel on the outside of the subunit. This chain is Large ribosomal subunit protein uL24, found in Dictyoglomus thermophilum (strain ATCC 35947 / DSM 3960 / H-6-12).